The primary structure comprises 287 residues: Cysteine-rich repeat secretory protein 59 (287 aa).

The N-terminal stretch at 1–26 (METTKKLSPIFCFSSLLCLFFTMNQA) is a signal peptide. Gnk2-homologous domains are found at residues 32 to 134 (HMDT…DKFF) and 140 to 250 (KKPN…ITTS). 8 N-linked (GlcNAc...) asparagine glycosylation sites follow: Asn43, Asn47, Asn63, Asn72, Asn93, Asn103, Asn111, and Asn212.

The protein belongs to the cysteine-rich repeat secretory protein family.

It localises to the secreted. The protein is Cysteine-rich repeat secretory protein 59 (CRRSP59) of Arabidopsis thaliana (Mouse-ear cress).